Consider the following 223-residue polypeptide: Endonuclease V (223 aa).

Residues D35 and D103 each contribute to the Mg(2+) site.

Belongs to the endonuclease V family. The cofactor is Mg(2+).

Its subcellular location is the cytoplasm. It carries out the reaction Endonucleolytic cleavage at apurinic or apyrimidinic sites to products with a 5'-phosphate.. In terms of biological role, DNA repair enzyme involved in the repair of deaminated bases. Selectively cleaves double-stranded DNA at the second phosphodiester bond 3' to a deoxyinosine leaving behind the intact lesion on the nicked DNA. The protein is Endonuclease V of Salmonella enteritidis PT4 (strain P125109).